Here is a 279-residue protein sequence, read N- to C-terminus: uncharacterized protein (279 aa).

The HTH lysR-type domain maps to Ile14–Thr71. The H-T-H motif DNA-binding region spans Gln31–Lys50.

The protein belongs to the LysR transcriptional regulatory family.

This is an uncharacterized protein from Methanocaldococcus jannaschii (strain ATCC 43067 / DSM 2661 / JAL-1 / JCM 10045 / NBRC 100440) (Methanococcus jannaschii).